Reading from the N-terminus, the 100-residue chain is Small ribosomal subunit protein bS20 (100 aa).

The protein belongs to the bacterial ribosomal protein bS20 family.

In terms of biological role, binds directly to 16S ribosomal RNA. This chain is Small ribosomal subunit protein bS20, found in Synechococcus sp. (strain JA-3-3Ab) (Cyanobacteria bacterium Yellowstone A-Prime).